A 216-amino-acid chain; its full sequence is Germin-like protein 1-1 (216 aa).

An N-terminal signal peptide occupies residues 1-24 (MARVQLWVAAACAVVLALAAPSLA). An intrachain disulfide couples C34 to C49. N-linked (GlcNAc...) asparagine glycosylation is found at N52 and N76. The Cupin type-1 domain occupies 61 to 209 (AGLKNPGNTN…AFRVDVPQVD (149 aa)). 4 residues coordinate Mn(2+): H109, H111, E116, and H155.

The protein belongs to the germin family. Oligomer (believed to be a pentamer but probably hexamer).

The protein localises to the secreted. It is found in the extracellular space. It localises to the apoplast. In terms of biological role, may play a role in plant defense. Probably has no oxalate oxidase activity even if the active site is conserved. The polypeptide is Germin-like protein 1-1 (GER4) (Oryza sativa subsp. japonica (Rice)).